Here is a 345-residue protein sequence, read N- to C-terminus: uncharacterized protein (345 aa).

Positions 1–198 constitute a CNNM transmembrane domain; that stretch reads MDVLSAVLLA…LSEGLLDHEE (198 aa). 2 helical membrane passes run 3-23 and 95-115; these read VLSA…FVGA and VPPA…HVLL. CBS domains follow at residues 217–280 and 285–342; these read AVPL…PQTV and VVRP…MRDG. Residues 312-332 form a helical membrane-spanning segment; that stretch reads LALVTADNGSVVGMVALEDVV.

This sequence belongs to the TerC family.

It localises to the cell membrane. This is an uncharacterized protein from Mycobacterium tuberculosis (strain ATCC 25618 / H37Rv).